The sequence spans 251 residues: UPF0309 protein SGR_3073 (251 aa).

An SIS domain is found at 36–221 (VADTVASGGR…EQLVARGIEP (186 aa)).

Belongs to the UPF0309 family.

This is UPF0309 protein SGR_3073 from Streptomyces griseus subsp. griseus (strain JCM 4626 / CBS 651.72 / NBRC 13350 / KCC S-0626 / ISP 5235).